A 188-amino-acid chain; its full sequence is Peptidyl-tRNA hydrolase (188 aa).

TRNA is bound at residue F15. H20 functions as the Proton acceptor in the catalytic mechanism. Residues Y64, N66, and N112 each coordinate tRNA.

This sequence belongs to the PTH family. In terms of assembly, monomer.

It is found in the cytoplasm. The catalysed reaction is an N-acyl-L-alpha-aminoacyl-tRNA + H2O = an N-acyl-L-amino acid + a tRNA + H(+). In terms of biological role, hydrolyzes ribosome-free peptidyl-tRNAs (with 1 or more amino acids incorporated), which drop off the ribosome during protein synthesis, or as a result of ribosome stalling. Catalyzes the release of premature peptidyl moieties from peptidyl-tRNA molecules trapped in stalled 50S ribosomal subunits, and thus maintains levels of free tRNAs and 50S ribosomes. This is Peptidyl-tRNA hydrolase from Borrelia duttonii (strain Ly).